Reading from the N-terminus, the 122-residue chain is Small ribosomal subunit protein uS12c (122 aa).

It belongs to the universal ribosomal protein uS12 family. Part of the 30S ribosomal subunit.

The protein localises to the plastid. The protein resides in the chloroplast. With S4 and S5 plays an important role in translational accuracy. Located at the interface of the 30S and 50S subunits. This Cyanidioschyzon merolae (strain NIES-3377 / 10D) (Unicellular red alga) protein is Small ribosomal subunit protein uS12c (rps12).